Here is a 64-residue protein sequence, read N- to C-terminus: Large ribosomal subunit protein bL35 (64 aa).

This sequence belongs to the bacterial ribosomal protein bL35 family.

The chain is Large ribosomal subunit protein bL35 from Pelodictyon phaeoclathratiforme (strain DSM 5477 / BU-1).